A 343-amino-acid polypeptide reads, in one-letter code: Nuclease EXOG, mitochondrial (343 aa).

His121 acts as the Proton acceptor in catalysis. Asn152 is an a divalent metal cation binding site.

This sequence belongs to the DNA/RNA non-specific endonuclease family. Homodimer. It depends on a divalent metal cation as a cofactor.

The protein localises to the mitochondrion inner membrane. Endo/exonuclease with nicking activity towards supercoiled DNA, a preference for single-stranded DNA and 5'-3' exonuclease activity. The protein is Nuclease EXOG, mitochondrial (exog) of Danio rerio (Zebrafish).